The sequence spans 118 residues: MRHRKANRQLRRTSEQRLALLRNLATSLIEQGAIETTEAKAKELRPFVEKLITKARTGTLHARRLAGKHVHKREAADKLFQELGPAFATRPGGYTRILKTGHRKGDGAEMARIELILS.

The protein belongs to the bacterial ribosomal protein bL17 family. As to quaternary structure, part of the 50S ribosomal subunit. Contacts protein L32.

The sequence is that of Large ribosomal subunit protein bL17 from Gemmatimonas aurantiaca (strain DSM 14586 / JCM 11422 / NBRC 100505 / T-27).